The following is a 221-amino-acid chain: Fanconi anemia core complex-associated protein 24 (221 aa).

Belongs to the multisubunit FA complex composed of FANCA, FANCB, FANCC, FANCE, FANCF, FANCG, FANCL/PHF9, FANCM and FAAP24. Interacts with FANCM.

It is found in the nucleus. In terms of biological role, plays a role in DNA repair through recruitment of the FA core complex to damaged DNA. Regulates FANCD2 monoubiquitination upon DNA damage. Induces chromosomal instability as well as hypersensitivity to DNA cross-linking agents, when repressed. Targets FANCM/FAAP24 complex to the DNA, preferentially to single strand DNA. This is Fanconi anemia core complex-associated protein 24 from Mus musculus (Mouse).